The following is a 114-amino-acid chain: Prostate stem cell antigen (114 aa).

The N-terminal stretch at 1 to 11 (MAGLALQPGTA) is a signal peptide. Residues 12 to 86 (LLCYSCKAQV…CCDTDLCNAS (75 aa)) enclose the UPAR/Ly6 domain. 5 cysteine pairs are disulfide-bonded: cysteine 14/cysteine 39, cysteine 17/cysteine 26, cysteine 32/cysteine 57, cysteine 61/cysteine 77, and cysteine 78/cysteine 83. N-linked (GlcNAc...) asparagine glycosylation is present at asparagine 31. A lipid anchor (GPI-anchor amidated serine) is attached at serine 86. The propeptide at 86-114 (SGAHALQPAAAILALLPALGLLLWGPGQL) is removed in mature form.

As to quaternary structure, interacts with CHRNA4. Post-translationally, N-glycosylated. In terms of tissue distribution, highly expressed in prostate (basal, secretory and neuroendocrine epithelium cells). Also found in bladder (transitional epithelium), placenta (trophoblasts), stomach (neuroendocrine cells), colon (neuroendocrine cells) and kidney (collecting ducts). Overexpressed in prostate cancers and expression is correlated with tumor stage, grade and androgen-independence. Highly expressed in prostate cancer bone metastases. Expressed in gastric epithelial cells, mainly in the isthmus (at protein level). Not detected in normal intestinal epithelium (at protein level). Expressed in brain cortex; expression is significantly increased in the front cortex of Alzheimer disease patients.

It is found in the cell membrane. May be involved in the regulation of cell proliferation. Has a cell-proliferation inhibition activity in vitro. In terms of biological role, may act as a modulator of nicotinic acetylcholine receptors (nAChRs) activity. In vitro inhibits nicotine-induced signaling probably implicating alpha-3:beta-2- or alpha-7-containing nAChRs. This is Prostate stem cell antigen (PSCA) from Homo sapiens (Human).